The following is a 355-amino-acid chain: Probable cinnamyl alcohol dehydrogenase (355 aa).

Zn(2+) is bound at residue C47. S49 lines the NADP(+) pocket. Zn(2+) contacts are provided by H69, E70, C100, C103, C106, C114, and C162. NADP(+)-binding positions include T166, G187 to G192, S210 to K215, T250, G274, and S297 to I299.

It belongs to the zinc-containing alcohol dehydrogenase family. In terms of assembly, homodimer. Requires Zn(2+) as cofactor.

It carries out the reaction (E)-cinnamyl alcohol + NADP(+) = (E)-cinnamaldehyde + NADPH + H(+). The enzyme catalyses (E)-coniferol + NADP(+) = (E)-coniferaldehyde + NADPH + H(+). The catalysed reaction is (E)-sinapyl alcohol + NADP(+) = (E)-sinapaldehyde + NADPH + H(+). It catalyses the reaction (E)-4-coumaroyl alcohol + NADP(+) = (E)-4-coumaraldehyde + NADPH + H(+). It carries out the reaction (E)-caffeyl alcohol + NADP(+) = (E)-caffeyl aldehyde + NADPH + H(+). Its pathway is aromatic compound metabolism; phenylpropanoid biosynthesis. Functionally, involved in lignin biosynthesis. Catalyzes the final step specific for the production of lignin monomers. Catalyzes the NADPH-dependent reduction of coniferaldehyde, 5-hydroxyconiferaldehyde, sinapaldehyde, 4-coumaraldehyde and caffeyl aldehyde to their respective alcohols. This chain is Probable cinnamyl alcohol dehydrogenase (CAD1), found in Eucalyptus botryoides (Southern mahogany).